Consider the following 249-residue polypeptide: UDP-2,3-diacylglucosamine hydrolase (249 aa).

Residues Asp7, His9, Asp40, Asn78, and His113 each coordinate Mn(2+). 78–79 (NR) contacts substrate. The substrate site is built by Asp121, Ser159, Thr163, Lys166, and His194. The Mn(2+) site is built by His194 and His196.

This sequence belongs to the LpxH family. Mn(2+) is required as a cofactor.

The protein resides in the cell inner membrane. It catalyses the reaction UDP-2-N,3-O-bis[(3R)-3-hydroxytetradecanoyl]-alpha-D-glucosamine + H2O = 2-N,3-O-bis[(3R)-3-hydroxytetradecanoyl]-alpha-D-glucosaminyl 1-phosphate + UMP + 2 H(+). Its pathway is glycolipid biosynthesis; lipid IV(A) biosynthesis; lipid IV(A) from (3R)-3-hydroxytetradecanoyl-[acyl-carrier-protein] and UDP-N-acetyl-alpha-D-glucosamine: step 4/6. In terms of biological role, hydrolyzes the pyrophosphate bond of UDP-2,3-diacylglucosamine to yield 2,3-diacylglucosamine 1-phosphate (lipid X) and UMP by catalyzing the attack of water at the alpha-P atom. Involved in the biosynthesis of lipid A, a phosphorylated glycolipid that anchors the lipopolysaccharide to the outer membrane of the cell. The protein is UDP-2,3-diacylglucosamine hydrolase of Pseudomonas fluorescens (strain SBW25).